Consider the following 457-residue polypeptide: Toxin and drug export protein A (457 aa).

Residues 1–23 form the signal peptide; the sequence is MFTIKKLTLTIVVATTLTGCANI.

The protein belongs to the outer membrane factor (OMF) (TC 1.B.17) family. As to quaternary structure, homotrimer. Probably part of a complex composed of LtxB, LtxD and TdeA, which forms a single transport channel across the two membranes.

The protein localises to the cell outer membrane. In terms of biological role, required for secretion of the LtxA leukotoxin and resistance to various antimicrobial compounds. The sequence is that of Toxin and drug export protein A from Aggregatibacter actinomycetemcomitans (Actinobacillus actinomycetemcomitans).